The sequence spans 833 residues: Capsid-associated protein Vp91 (833 aa).

Positions 1–18 (MSGVVLLVLAIILITIFS) are cleaved as a signal peptide. Residues Asn137, Asn180, Asn199, and Asn210 are each glycosylated (N-linked (GlcNAc...) asparagine; by host). A C2HC BV-type zinc finger spans residues 147 to 196 (CVPEDPCSGRPPGRYPMNELLLDTLVHNQHSDKNYSAGAHLYHPTLYLRC). 2 disulfides stabilise this stretch: Cys207/Cys220 and Cys260/Cys273. A Chitin-binding type-2 domain is found at 223–281 (NELCEGRPDGFVLPYFPEALLVNEFVECRNGEHVVAQCADGQVFDRALMTCVHAHPCAF). 4 N-linked (GlcNAc...) asparagine; by host glycosylation sites follow: Asn408, Asn413, Asn588, and Asn609. The interval 647 to 673 (EPGGDGDHWAPEVPPTQPEPELEPESE) is disordered.

The protein localises to the virion. Probable capsid-associated protein. The polypeptide is Capsid-associated protein Vp91 (Choristoneura fumiferana nuclear polyhedrosis virus (CfMNPV)).